The sequence spans 191 residues: Leucyl/phenylalanyl-tRNA--protein transferase (191 aa).

The protein belongs to the L/F-transferase family.

The protein localises to the cytoplasm. The catalysed reaction is N-terminal L-lysyl-[protein] + L-leucyl-tRNA(Leu) = N-terminal L-leucyl-L-lysyl-[protein] + tRNA(Leu) + H(+). The enzyme catalyses N-terminal L-arginyl-[protein] + L-leucyl-tRNA(Leu) = N-terminal L-leucyl-L-arginyl-[protein] + tRNA(Leu) + H(+). It carries out the reaction L-phenylalanyl-tRNA(Phe) + an N-terminal L-alpha-aminoacyl-[protein] = an N-terminal L-phenylalanyl-L-alpha-aminoacyl-[protein] + tRNA(Phe). Functions in the N-end rule pathway of protein degradation where it conjugates Leu, Phe and, less efficiently, Met from aminoacyl-tRNAs to the N-termini of proteins containing an N-terminal arginine or lysine. The chain is Leucyl/phenylalanyl-tRNA--protein transferase from Herpetosiphon aurantiacus (strain ATCC 23779 / DSM 785 / 114-95).